The sequence spans 302 residues: 4-hydroxy-tetrahydrodipicolinate synthase (302 aa).

Position 50 (Thr50) interacts with pyruvate. Tyr138 (proton donor/acceptor) is an active-site residue. The Schiff-base intermediate with substrate role is filled by Lys167. Val209 provides a ligand contact to pyruvate.

Belongs to the DapA family. In terms of assembly, homotetramer; dimer of dimers.

The protein localises to the cytoplasm. The enzyme catalyses L-aspartate 4-semialdehyde + pyruvate = (2S,4S)-4-hydroxy-2,3,4,5-tetrahydrodipicolinate + H2O + H(+). It participates in amino-acid biosynthesis; L-lysine biosynthesis via DAP pathway; (S)-tetrahydrodipicolinate from L-aspartate: step 3/4. Functionally, catalyzes the condensation of (S)-aspartate-beta-semialdehyde [(S)-ASA] and pyruvate to 4-hydroxy-tetrahydrodipicolinate (HTPA). The sequence is that of 4-hydroxy-tetrahydrodipicolinate synthase from Salinibacter ruber (strain DSM 13855 / M31).